Here is a 120-residue protein sequence, read N- to C-terminus: BLOC-1-related complex subunit 8 (120 aa).

Residues 101-120 are disordered; that stretch reads MNTSAQGHSQEKLSPPPSLA. Phosphoserine is present on Ser109.

This sequence belongs to the BORCS8 family. As to quaternary structure, component of the BLOC-one-related complex (BORC) which is composed of BLOC1S1, BLOC1S2, BORCS5, BORCS6, BORCS7, BORCS8, KXD1 and SNAPIN.

It is found in the lysosome membrane. Its function is as follows. As part of the BLOC-one-related complex (BORC), it plays a role in the movement and localization of lysosomes at the cell periphery. Associated with the cytosolic face of lysosomes, BORC recruits ARL8B to the lysosomal membrane and couples lysosomes to microtubule plus-end-directed kinesin motors, driving lysosome movement toward the cell periphery. This is BLOC-1-related complex subunit 8 from Mus musculus (Mouse).